A 143-amino-acid chain; its full sequence is Transcriptional regulator MraZ (143 aa).

SpoVT-AbrB domains are found at residues 5–47 and 76–119; these read SHTP…PMAE and AADD…DAQR.

It belongs to the MraZ family. Forms oligomers.

It is found in the cytoplasm. The protein localises to the nucleoid. The chain is Transcriptional regulator MraZ from Frankia alni (strain DSM 45986 / CECT 9034 / ACN14a).